A 536-amino-acid chain; its full sequence is MALTSFLPAPTQLSQDQLEAEEKARSQRSRQTSLVSSRREPPPYGYRKGWIPRLLEDFGDGGAFPEIHVAQYPLDMGRKKKMSNALAIQVDAEGKIKYDAIARQGQSKDKVIYSKYTDLVPKEVMNADDPDLQRPDEEAIKEITEKTRVALEKSVSQKVAAAMPVRAADKLAPAQYIRYTPSQQGVAFNSGAKQRVIRMVEMQKDPMEPPRFKINKKIPRGPPSPPAPVMHSPSRKMTVKEQQEWKIPPCISNWKNAKGYTIPLDKRLAADGRGLQTVHINENFAKLAEALYIADRKAREAVEMRAQVERKMAQKEKEKHEEKLREMAQKARERRAGIKTHVEKEDGEARERDEIRHDRRKERQHDRNLSRAAPDKRSKLQRNENRDISEVIALGVPNPRTSNEVQYDQRLFNQSKGMDSGFAGGEDEIYNVYDQAWRGGKDMAQNIYRPSKNLDKDMYGDDLEARIKTNRFVPDKEFSGSDRRQRGREGPVQFEEDPFGLDKFLEEAKQHGGSKRPSDSSRPKEHEHEGKKRRKE.

Residues 1–46 form a disordered region; sequence MALTSFLPAPTQLSQDQLEAEEKARSQRSRQTSLVSSRREPPPYGY. A2 is modified (N-acetylalanine). Phosphoserine is present on S14. K23 participates in a covalent cross-link: Glycyl lysine isopeptide (Lys-Gly) (interchain with G-Cter in SUMO2). The interval 59 to 79 is interaction with PPIL1; sequence GDGGAFPEIHVAQYPLDMGRK. Glycyl lysine isopeptide (Lys-Gly) (interchain with G-Cter in SUMO2) cross-links involve residues K81, K97, K115, K122, K141, K158, and K170. An SNW region spans residues 174–339; sequence AQYIRYTPSQ…KARERRAGIK (166 aa). A phosphoserine mark is found at S182 and S190. A Glycyl lysine isopeptide (Lys-Gly) (interchain with G-Cter in SUMO2) cross-link involves residue K193. Residues 209–233 are disordered; sequence PPRFKINKKIPRGPPSPPAPVMHSP. Phosphoserine occurs at positions 224, 232, and 234. Glycyl lysine isopeptide (Lys-Gly) (interchain with G-Cter in SUMO2) cross-links involve residues K240, K258, K286, K339, K344, K416, K441, and K452. The tract at residues 311-386 is disordered; sequence KMAQKEKEKH…RSKLQRNENR (76 aa). 2 stretches are compositionally biased toward basic and acidic residues: residues 472–489 and 503–530; these read FVPD…RGRE and KFLE…EHEG. Residues 472-536 form a disordered region; sequence FVPDKEFSGS…EHEGKKRRKE (65 aa). Residues S479 and S481 each carry the phosphoserine modification. Residue K509 forms a Glycyl lysine isopeptide (Lys-Gly) (interchain with G-Cter in SUMO2) linkage.

It belongs to the SNW family. As to quaternary structure, identified in the spliceosome C complex. Associates with U4/U6-U5 tri-small nuclear ribonucleoproteins (U4/U6-U5 tri-snRNPs). Component of the minor spliceosome, which splices U12-type introns. Interacts with SKI, SMAD2,SMAD3, RBPJ, RB1, PABPN1, MAGEA1, SIRT1, FOXN3, U2AF2, PPIL1, DAXX and ATP1B4. Interacts with VDR and RXRA; preferentially associates with VDR:RXRA heterodimers. Interacts with NCOR2. Interacts with MAML1. Interacts with NOTCH1 NICD; the interaction involves multimerized NOTCH1 NICD. Forms a complex with NOTCH1 NICD and MAML1; the association is dissociated by RBPJ. Associates with positive transcription elongation factor b (P-TEFb). Component of the SNARP complex which consists at least of SNIP1, SNW1, THRAP3, BCLAF1 and PNN.

The protein resides in the nucleus. Functionally, involved in pre-mRNA splicing as component of the spliceosome. As a component of the minor spliceosome, involved in the splicing of U12-type introns in pre-mRNAs. Required in the specific splicing of CDKN1A pre-mRNA; the function probably involves the recruitment of U2AF2 to the mRNA. May recruit PPIL1 to the spliceosome. May be involved in cyclin-D1/CCND1 mRNA stability through the SNARP complex which associates with both the 3'end of the CCND1 gene and its mRNA. Involved in transcriptional regulation. Modulates TGF-beta-mediated transcription via association with SMAD proteins, MYOD1-mediated transcription via association with PABPN1, RB1-mediated transcriptional repression, and retinoid-X receptor (RXR)- and vitamin D receptor (VDR)-dependent gene transcription in a cell line-specific manner probably involving coactivators NCOA1 and GRIP1. Is involved in NOTCH1-mediated transcriptional activation. Binds to multimerized forms of Notch intracellular domain (NICD) and is proposed to recruit transcriptional coactivators such as MAML1 to form an intermediate preactivation complex which associates with DNA-bound CBF-1/RBPJ to form a transcriptional activation complex by releasing SNW1 and redundant NOTCH1 NICD. This Bos taurus (Bovine) protein is SNW domain-containing protein 1 (SNW1).